Here is a 312-residue protein sequence, read N- to C-terminus: tRNA (adenine(58)-N(1))-methyltransferase catalytic subunit trmt61a (312 aa).

S-adenosyl-L-methionine-binding positions include leucine 85, 112–114 (SGS), glutamate 133, arginine 138, 161–162 (DA), and aspartate 183.

The protein belongs to the class I-like SAM-binding methyltransferase superfamily. TRM61 family. Heterotetramer; composed of two copies of trmt6 and two copies of trmt61a.

Its subcellular location is the nucleus. It carries out the reaction adenosine(58) in tRNA + S-adenosyl-L-methionine = N(1)-methyladenosine(58) in tRNA + S-adenosyl-L-homocysteine + H(+). Inhibited by calcium and magnesium ions and spermidine. Enhanced by KCl, NaCl and NH(4)Cl in concentrations from 0.1-0.25 M. Concentrations of more than 0.3 M are inhibitory. Its function is as follows. Catalytic subunit of tRNA (adenine-N(1)-)-methyltransferase, which catalyzes the formation of N(1)-methyladenine at position 58 (m1A58) in initiator methionyl-tRNA. The protein is tRNA (adenine(58)-N(1))-methyltransferase catalytic subunit trmt61a (trmt61a) of Dictyostelium discoideum (Social amoeba).